Consider the following 489-residue polypeptide: Membrane-bound acylglycerophosphatidylinositol O-acyltransferase frj (489 aa).

3 helical membrane passes run 2–22 (SIDD…GSYV), 40–60 (VLVV…SLAL), and 75–95 (LVTF…DFYF). Active-site residues include asparagine 331 and histidine 364. 2 consecutive transmembrane segments (helical) span residues 405–425 (VIFW…FLLS) and 433–453 (FYSS…ALGF).

It belongs to the membrane-bound acyltransferase family.

It localises to the membrane. The enzyme catalyses a 1-acyl-sn-glycero-3-phospho-(1D-myo-inositol) + (5Z,8Z,11Z,14Z)-eicosatetraenoyl-CoA = a 1-acyl-2-(5Z,8Z,11Z,14Z-eicosatetraenoyl)-sn-glycero-3-phospho-(1D-myo-inositol) + CoA. It carries out the reaction a 1-acyl-sn-glycero-3-phosphocholine + an acyl-CoA = a 1,2-diacyl-sn-glycero-3-phosphocholine + CoA. The catalysed reaction is (9Z)-hexadecenoyl-CoA + 1-hexadecanoyl-sn-glycero-3-phosphocholine = 1-hexadecanoyl-2-(9Z-hexadecenoyl)-sn-glycero-3-phosphocholine + CoA. It catalyses the reaction a 1-acyl-sn-glycero-3-phospho-L-serine + an acyl-CoA = a 1,2-diacyl-sn-glycero-3-phospho-L-serine + CoA. The enzyme catalyses 1-(9Z-octadecenoyl)-sn-glycero-3-phospho-L-serine + (9Z)-hexadecenoyl-CoA = 1-(9Z-octadecenoyl)-2-(9Z-hexadecenoyl)-sn-glycero-3-phospho-L-serine + CoA. It carries out the reaction a 1-acyl-sn-glycero-3-phosphoethanolamine + an acyl-CoA = a 1,2-diacyl-sn-glycero-3-phosphoethanolamine + CoA. The catalysed reaction is 1-hexadecanoyl-sn-glycero-3-phosphoethanolamine + (9Z)-hexadecenoyl-CoA = 1-hexadecanoyl-2-(9Z)-hexadecenoyl-sn-glycero-3-phosphoethanolamine + CoA. The protein operates within lipid metabolism; phospholipid metabolism. Functionally, acyltransferase that mediates the acylation of lysophospholipids to produce phospholipids (glycerophospholipids). Highest activity with lysophosphatidylinositol (1-acyl-sn-glycero-3-phospho-(1D-myo-inositol) or LPI) producing phosphatidylinositol (1,2-diacyl-sn-glycero-3-phospho-(1D-myo-inositol) or PI) (LPIAT activity), but also converts lysophosphatidylcholine (1-acyl-sn-glycero-3-phosphocholine or LPC) to phosphatidylcholine (1,2-diacyl-sn-glycero-3-phosphocholine or PC) (LPCAT activity), lysophosphatidylserine (1-acyl-2-hydroxy-sn-glycero-3-phospho-L-serine or LPS) to phosphatidylserine (1,2-diacyl-sn-glycero-3-phospho-L-serine or PS) (LPSAT activity), and lysophosphatidylethanolamine (1-acyl-sn-glycero-3-phosphoethanolamine or LPE) producing phosphatidylethanolamine (1,2-diacyl-sn-glycero-3-phosphoethanolamine or PE) (LPEAT activity). Has a preference for unsaturated fatty acid arachidonoyl-CoA ((5Z,8Z,11Z,14Z)-eicosatetraenoyl-CoA). Glycerophospholipids are important structural and functional components of cellular membrane, acyl-chain remodeling regulates the molecular species distribution of glycerophospholipids which can affect membrane fluidity and curvature. The polypeptide is Membrane-bound acylglycerophosphatidylinositol O-acyltransferase frj (Drosophila melanogaster (Fruit fly)).